Consider the following 256-residue polypeptide: Cell division protein ZapD (256 aa).

It belongs to the ZapD family. Interacts with FtsZ.

It localises to the cytoplasm. Its function is as follows. Cell division factor that enhances FtsZ-ring assembly. Directly interacts with FtsZ and promotes bundling of FtsZ protofilaments, with a reduction in FtsZ GTPase activity. In Aromatoleum aromaticum (strain DSM 19018 / LMG 30748 / EbN1) (Azoarcus sp. (strain EbN1)), this protein is Cell division protein ZapD.